The chain runs to 809 residues: Zygotic DNA replication licensing factor mcm3 (809 aa).

The MCM domain maps to 297-504; that stretch reads IFEQLSRSLA…QDREISDHVL (208 aa). Residue 347 to 354 coordinates ATP; it reads GDPSVAKS. An Arginine finger motif is present at residues 479 to 482; sequence SRFD. The segment at 664-741 is disordered; it reads KKRRRRDEDS…TDSSAKPGLS (78 aa). The span at 696 to 705 shows a compositional bias: basic and acidic residues; that stretch reads AQEGESHDPY.

This sequence belongs to the MCM family. As to quaternary structure, component of the mcm2-7 complex (RLF-M). The complex forms a toroidal hexameric ring with the proposed subunit order mcm2-mcm6-mcm4-mcm7-mcm3-mcm5. Component of the CMG helicase complex, composed of the mcm2-7 complex, the GINS complex and cdc45.

It localises to the nucleus. The protein resides in the chromosome. The catalysed reaction is ATP + H2O = ADP + phosphate + H(+). Its function is as follows. Acts as a component of the MCM2-7 complex (MCM complex) which is the putative replicative helicase essential for 'once per cell cycle' DNA replication initiation and elongation in eukaryotic cells. The active ATPase sites in the MCM2-7 ring are formed through the interaction surfaces of two neighboring subunits such that a critical structure of a conserved arginine finger motif is provided in trans relative to the ATP-binding site of the Walker A box of the adjacent subunit. The six ATPase active sites, however, are likely to contribute differentially to the complex helicase activity. The existence of maternal and zygotic forms of mcm3 and mcm6 suggests that specific forms of mcm2-7 complexes may be used during different stages of development. The protein is Zygotic DNA replication licensing factor mcm3 (zmcm3) of Xenopus tropicalis (Western clawed frog).